We begin with the raw amino-acid sequence, 213 residues long: Glycerol-3-phosphate acyltransferase (213 aa).

Helical transmembrane passes span 3 to 23 (ILLL…LWIG), 55 to 75 (ITFL…IWLG), 80 to 100 (SPLI…FTGF), 110 to 130 (AGVL…VFAL), 142 to 162 (SITA…IHFL), and 163 to 183 (LDGY…VIIF).

The protein belongs to the PlsY family. Probably interacts with PlsX.

It localises to the cell membrane. The catalysed reaction is an acyl phosphate + sn-glycerol 3-phosphate = a 1-acyl-sn-glycero-3-phosphate + phosphate. It functions in the pathway lipid metabolism; phospholipid metabolism. Its function is as follows. Catalyzes the transfer of an acyl group from acyl-phosphate (acyl-PO(4)) to glycerol-3-phosphate (G3P) to form lysophosphatidic acid (LPA). This enzyme utilizes acyl-phosphate as fatty acyl donor, but not acyl-CoA or acyl-ACP. This chain is Glycerol-3-phosphate acyltransferase, found in Streptococcus thermophilus (strain CNRZ 1066).